A 117-amino-acid chain; its full sequence is Large ribosomal subunit protein bL17 (117 aa).

It belongs to the bacterial ribosomal protein bL17 family. In terms of assembly, part of the 50S ribosomal subunit. Contacts protein L32.

The chain is Large ribosomal subunit protein bL17 from Dehalococcoides mccartyi (strain ATCC BAA-2100 / JCM 16839 / KCTC 5957 / BAV1).